The sequence spans 274 residues: Non-homologous end joining protein Ku (274 aa).

The Ku domain maps to 11–195 (ITFGLVNVPV…KYKITPKELS (185 aa)).

Belongs to the prokaryotic Ku family. As to quaternary structure, homodimer. Interacts with LigD.

With LigD forms a non-homologous end joining (NHEJ) DNA repair enzyme, which repairs dsDNA breaks with reduced fidelity. Binds linear dsDNA with 5'- and 3'- overhangs but not closed circular dsDNA nor ssDNA. Recruits and stimulates the ligase activity of LigD. The chain is Non-homologous end joining protein Ku from Coxiella burnetii (strain RSA 331 / Henzerling II).